We begin with the raw amino-acid sequence, 211 residues long: Ubiquitin-conjugating enzyme E2 S-B (211 aa).

Positions 11-157 (HIIRRVYKEV…ARLMTDIHAQ (147 aa)) constitute a UBC core domain. Cys-95 (glycyl thioester intermediate) is an active-site residue. Positions 158 to 211 (GTSLRGKDPTDPCSSASTPVVSGDGPMAKKHAGDRDKKLAAKKKTDKKRALRRL) are disordered. The span at 197–211 (AAKKKTDKKRALRRL) shows a compositional bias: basic residues.

It belongs to the ubiquitin-conjugating enzyme family.

It catalyses the reaction S-ubiquitinyl-[E1 ubiquitin-activating enzyme]-L-cysteine + [E2 ubiquitin-conjugating enzyme]-L-cysteine = [E1 ubiquitin-activating enzyme]-L-cysteine + S-ubiquitinyl-[E2 ubiquitin-conjugating enzyme]-L-cysteine.. Its pathway is protein modification; protein ubiquitination. Catalyzes the covalent attachment of ubiquitin to other proteins. Acts as an essential factor of the anaphase promoting complex/cyclosome (APC/C), a cell cycle-regulated ubiquitin ligase that controls progression through mitosis. Acts by specifically elongating 'Lys-11'-linked polyubiquitin chains initiated by the E2 enzyme ube2c/ubch10 on APC/C substrates, enhancing the degradation of APC/C substrates by the proteasome and promoting mitotic exit. This is Ubiquitin-conjugating enzyme E2 S-B (ube2s-b) from Xenopus laevis (African clawed frog).